The sequence spans 547 residues: Glucose-6-phosphate isomerase (547 aa).

Glu-353 acts as the Proton donor in catalysis. Residues His-384 and Lys-512 contribute to the active site.

Belongs to the GPI family.

The protein localises to the cytoplasm. The catalysed reaction is alpha-D-glucose 6-phosphate = beta-D-fructose 6-phosphate. It participates in carbohydrate biosynthesis; gluconeogenesis. Its pathway is carbohydrate degradation; glycolysis; D-glyceraldehyde 3-phosphate and glycerone phosphate from D-glucose: step 2/4. In terms of biological role, catalyzes the reversible isomerization of glucose-6-phosphate to fructose-6-phosphate. The protein is Glucose-6-phosphate isomerase of Campylobacter jejuni subsp. doylei (strain ATCC BAA-1458 / RM4099 / 269.97).